We begin with the raw amino-acid sequence, 439 residues long: Ornithine aminotransferase, mitochondrial (439 aa).

A mitochondrion-targeting transit peptide spans 1-25 (MLSKLARLQTVAGLGLGVHSSVASA). 2 positions are modified to N6-acetyllysine: Lys49 and Lys66. Lys102 is modified (N6-succinyllysine). The residue at position 107 (Lys107) is an N6-acetyllysine; alternate. An N6-succinyllysine; alternate modification is found at Lys107. The residue at position 292 (Lys292) is an N6-(pyridoxal phosphate)lysine. Lys362 is modified (N6-acetyllysine; alternate). At Lys362 the chain carries N6-succinyllysine; alternate. N6-acetyllysine is present on residues Lys386 and Lys392. Residue Lys405 is modified to N6-acetyllysine; alternate. The residue at position 405 (Lys405) is an N6-succinyllysine; alternate. Position 421 is an N6-acetyllysine (Lys421).

The protein belongs to the class-III pyridoxal-phosphate-dependent aminotransferase family. In terms of assembly, homohexamer. Pyridoxal 5'-phosphate is required as a cofactor.

Its subcellular location is the mitochondrion matrix. It catalyses the reaction L-ornithine + 2-oxoglutarate = L-glutamate 5-semialdehyde + L-glutamate. It participates in amino-acid biosynthesis; L-proline biosynthesis; L-glutamate 5-semialdehyde from L-ornithine: step 1/1. Catalyzes the reversible interconversion of L-ornithine and 2-oxoglutarate to L-glutamate semialdehyde and L-glutamate. The chain is Ornithine aminotransferase, mitochondrial (OAT) from Bos taurus (Bovine).